A 103-amino-acid chain; its full sequence is Large ribosomal subunit protein uL24 (103 aa).

The protein belongs to the universal ribosomal protein uL24 family. In terms of assembly, part of the 50S ribosomal subunit.

In terms of biological role, one of two assembly initiator proteins, it binds directly to the 5'-end of the 23S rRNA, where it nucleates assembly of the 50S subunit. Its function is as follows. One of the proteins that surrounds the polypeptide exit tunnel on the outside of the subunit. The protein is Large ribosomal subunit protein uL24 of Lachnospira eligens (strain ATCC 27750 / DSM 3376 / VPI C15-48 / C15-B4) (Eubacterium eligens).